A 416-amino-acid chain; its full sequence is Gamma-glutamyl phosphate reductase (416 aa).

This sequence belongs to the gamma-glutamyl phosphate reductase family.

It localises to the cytoplasm. It catalyses the reaction L-glutamate 5-semialdehyde + phosphate + NADP(+) = L-glutamyl 5-phosphate + NADPH + H(+). It participates in amino-acid biosynthesis; L-proline biosynthesis; L-glutamate 5-semialdehyde from L-glutamate: step 2/2. Its function is as follows. Catalyzes the NADPH-dependent reduction of L-glutamate 5-phosphate into L-glutamate 5-semialdehyde and phosphate. The product spontaneously undergoes cyclization to form 1-pyrroline-5-carboxylate. This Leptospira interrogans serogroup Icterohaemorrhagiae serovar copenhageni (strain Fiocruz L1-130) protein is Gamma-glutamyl phosphate reductase.